Here is a 120-residue protein sequence, read N- to C-terminus: Seripauperin-10 (120 aa).

A signal peptide spans 1–20 (MVKLTSIAAGVAAIAATASA).

The protein belongs to the SRP1/TIP1 family. Seripauperin subfamily.

The chain is Seripauperin-10 (PAU10) from Saccharomyces cerevisiae (strain ATCC 204508 / S288c) (Baker's yeast).